Consider the following 111-residue polypeptide: T cell receptor beta variable 20-1 (111 aa).

Residues 1-15 (MLLLLLLLGPGSGLG) form the signal peptide. An Ig-like domain is found at 16–111 (AVVSQHPSRV…DSSFYICSAR (96 aa)). Cysteine 37 and cysteine 108 are oxidised to a cystine.

In terms of assembly, alpha-beta TR is a heterodimer composed of an alpha and beta chain; disulfide-linked. The alpha-beta TR is associated with the transmembrane signaling CD3 coreceptor proteins to form the TR-CD3 (TcR or TCR). The assembly of alpha-beta TR heterodimers with CD3 occurs in the endoplasmic reticulum where a single alpha-beta TR heterodimer associates with one CD3D-CD3E heterodimer, one CD3G-CD3E heterodimer and one CD247 homodimer forming a stable octameric structure. CD3D-CD3E and CD3G-CD3E heterodimers preferentially associate with TR alpha and TR beta chains, respectively. The association of the CD247 homodimer is the last step of TcR assembly in the endoplasmic reticulum and is required for transport to the cell surface.

The protein localises to the cell membrane. Functionally, v region of the variable domain of T cell receptor (TR) beta chain that participates in the antigen recognition. Alpha-beta T cell receptors are antigen specific receptors which are essential to the immune response and are present on the cell surface of T lymphocytes. Recognize peptide-major histocompatibility (MH) (pMH) complexes that are displayed by antigen presenting cells (APC), a prerequisite for efficient T cell adaptive immunity against pathogens. Binding of alpha-beta TR to pMH complex initiates TR-CD3 clustering on the cell surface and intracellular activation of LCK that phosphorylates the ITAM motifs of CD3G, CD3D, CD3E and CD247 enabling the recruitment of ZAP70. In turn ZAP70 phosphorylates LAT, which recruits numerous signaling molecules to form the LAT signalosome. The LAT signalosome propagates signal branching to three major signaling pathways, the calcium, the mitogen-activated protein kinase (MAPK) kinase and the nuclear factor NF-kappa-B (NF-kB) pathways, leading to the mobilization of transcription factors that are critical for gene expression and essential for T cell growth and differentiation. The T cell repertoire is generated in the thymus, by V-(D)-J rearrangement. This repertoire is then shaped by intrathymic selection events to generate a peripheral T cell pool of self-MH restricted, non-autoaggressive T cells. Post-thymic interaction of alpha-beta TR with the pMH complexes shapes TR structural and functional avidity. The chain is T cell receptor beta variable 20-1 from Homo sapiens (Human).